We begin with the raw amino-acid sequence, 283 residues long: Release factor glutamine methyltransferase (283 aa).

S-adenosyl-L-methionine-binding positions include 121–125 (GTGSG), aspartate 144, and asparagine 188. Substrate is bound at residue 188–191 (NPPY).

Belongs to the protein N5-glutamine methyltransferase family. PrmC subfamily.

It catalyses the reaction L-glutaminyl-[peptide chain release factor] + S-adenosyl-L-methionine = N(5)-methyl-L-glutaminyl-[peptide chain release factor] + S-adenosyl-L-homocysteine + H(+). In terms of biological role, methylates the class 1 translation termination release factors RF1/PrfA and RF2/PrfB on the glutamine residue of the universally conserved GGQ motif. In Bacillus anthracis, this protein is Release factor glutamine methyltransferase.